A 374-amino-acid polypeptide reads, in one-letter code: tRNA (guanine(26)-N(2))-dimethyltransferase (374 aa).

A Trm1 methyltransferase domain is found at 4–371 (IEIREGKASL…KEIDEIVNCI (368 aa)). Residues Arg-44, Arg-69, Asp-87, Asp-113, and Ala-114 each contribute to the S-adenosyl-L-methionine site. Zn(2+) is bound by residues Cys-244, Cys-247, Cys-261, and Cys-264.

It belongs to the class I-like SAM-binding methyltransferase superfamily. Trm1 family.

The enzyme catalyses guanosine(26) in tRNA + 2 S-adenosyl-L-methionine = N(2)-dimethylguanosine(26) in tRNA + 2 S-adenosyl-L-homocysteine + 2 H(+). Functionally, dimethylates a single guanine residue at position 26 of a number of tRNAs using S-adenosyl-L-methionine as donor of the methyl groups. In Sulfurisphaera tokodaii (strain DSM 16993 / JCM 10545 / NBRC 100140 / 7) (Sulfolobus tokodaii), this protein is tRNA (guanine(26)-N(2))-dimethyltransferase.